The primary structure comprises 130 residues: RxLR effector protein PITG_14783 (130 aa).

The first 20 residues, 1–20 (MRLPYVFAATMATLLVSSNA), serve as a signal peptide directing secretion. The interval 27–58 (AMLSSPNEQHQRQLRSHQTPVEDQEPDEERSL) is disordered. The RxLR-dEER signature appears at 38–56 (RQLRSHQTPVEDQEPDEER).

The protein belongs to the RxLR effector family.

The protein resides in the secreted. It is found in the host nucleus. It localises to the host cytoplasm. Functionally, effector that enhances P.infestans colonization of Nicotiana benthamiana leaves. The polypeptide is RxLR effector protein PITG_14783 (Phytophthora infestans (strain T30-4) (Potato late blight agent)).